A 653-amino-acid polypeptide reads, in one-letter code: Hepatocyte growth factor activator serine protease (653 aa).

Residues Met1–Pro34 form the signal peptide. The tract at residues Pro34–Leu98 is disordered. The propeptide at Gln35–Arg369 is removed in mature form. N-linked (GlcNAc...) asparagine glycosylation is found at Asn39, Asn47, and Asn63. Residues Asn47–Val59 are compositionally biased toward low complexity. Residues Glu100–Glu147 enclose the Fibronectin type-II domain. 19 disulfide bridges follow: Cys105/Cys130, Cys119/Cys145, Cys161/Cys172, Cys166/Cys183, Cys185/Cys194, Cys199/Cys227, Cys225/Cys234, Cys242/Cys253, Cys247/Cys264, Cys266/Cys275, Cys283/Cys364, Cys304/Cys346, Cys335/Cys359, Cys392/Cys519, Cys430/Cys446, Cys438/Cys508, Cys533/Cys602, Cys565/Cys581, and Cys592/Cys620. The EGF-like 1 domain occupies Ile157–Gly195. Residues Glu197 to Thr237 enclose the Fibronectin type-I domain. The 39-residue stretch at His238–Asn276 folds into the EGF-like 2 domain. The Kringle domain occupies Cys283 to Cys364. Asn287 carries N-linked (GlcNAc...) asparagine glycosylation. One can recognise a Peptidase S1 domain in the interval Ile406–Arg644. His445 (charge relay system) is an active-site residue. N-linked (GlcNAc...) asparagine glycosylation is present at Asn466. Residue Asp495 is the Charge relay system of the active site. Asn544 is a glycosylation site (N-linked (GlcNAc...) asparagine). The active-site Charge relay system is the Ser596.

Belongs to the peptidase S1 family. Heterodimer of a short chain and a long chain linked by a disulfide bond. The active form of HGFAC presents in the serum is derived from the COOH-terminal region of the precursor by the cleavage of bonds between Arg-369 and Val-370 and Arg-405 and Ile-406.

It is found in the secreted. Its function is as follows. Serine protease that hydrolyzes the inactive zymogen hepatocyte growth factor (HGFsc) to an activated disulfide-linked heterodimer, then initiating hepatocyte growth factor receptor signaling pathway. This Mus musculus (Mouse) protein is Hepatocyte growth factor activator serine protease.